The following is a 249-amino-acid chain: CDP-diacylglycerol pyrophosphatase (249 aa).

Residues 7 to 27 (FLLAVVIVAAVAGIGYWKLAA) traverse the membrane as a helical segment.

This sequence belongs to the Cdh family.

It is found in the cell inner membrane. The enzyme catalyses a CDP-1,2-diacyl-sn-glycerol + H2O = a 1,2-diacyl-sn-glycero-3-phosphate + CMP + 2 H(+). Its pathway is phospholipid metabolism; CDP-diacylglycerol degradation; phosphatidate from CDP-diacylglycerol: step 1/1. In Citrobacter koseri (strain ATCC BAA-895 / CDC 4225-83 / SGSC4696), this protein is CDP-diacylglycerol pyrophosphatase.